The primary structure comprises 201 residues: 3-isopropylmalate dehydratase small subunit (201 aa).

This sequence belongs to the LeuD family. LeuD type 1 subfamily. Heterodimer of LeuC and LeuD.

The enzyme catalyses (2R,3S)-3-isopropylmalate = (2S)-2-isopropylmalate. It functions in the pathway amino-acid biosynthesis; L-leucine biosynthesis; L-leucine from 3-methyl-2-oxobutanoate: step 2/4. Catalyzes the isomerization between 2-isopropylmalate and 3-isopropylmalate, via the formation of 2-isopropylmaleate. The chain is 3-isopropylmalate dehydratase small subunit from Xanthobacter autotrophicus (strain ATCC BAA-1158 / Py2).